Here is a 435-residue protein sequence, read N- to C-terminus: Proline--tRNA ligase (435 aa).

Belongs to the class-II aminoacyl-tRNA synthetase family. ProS type 2 subfamily. Homodimer.

It localises to the cytoplasm. The enzyme catalyses tRNA(Pro) + L-proline + ATP = L-prolyl-tRNA(Pro) + AMP + diphosphate. Catalyzes the attachment of proline to tRNA(Pro) in a two-step reaction: proline is first activated by ATP to form Pro-AMP and then transferred to the acceptor end of tRNA(Pro). This is Proline--tRNA ligase from Rhodospirillum rubrum (strain ATCC 11170 / ATH 1.1.1 / DSM 467 / LMG 4362 / NCIMB 8255 / S1).